The chain runs to 786 residues: Progesterone receptor (786 aa).

The segment covering 1–10 (MTEVKSKETR) has biased composition (basic and acidic residues). 3 disordered regions span residues 1–95 (MTEV…SKDC), 110–212 (AAPW…ASPA), and 252–279 (SAFG…DGKE). Residues 1–420 (MTEVKSKETR…YSFESLPQKI (420 aa)) form a modulating, Pro-Rich region. K7 participates in a covalent cross-link: Glycyl lysine isopeptide (Lys-Gly) (interchain with G-Cter in SUMO). A compositionally biased stretch (acidic residues) spans 48-79 (DEEEEEEENEEEEEEEEPQQREEEEEEEEEDR). Pro residues predominate over residues 143–154 (APGPSQPRPGAP). Residues 186–197 (AEERGFPERDAG) show a composition bias toward basic and acidic residues. The segment covering 203–212 (LAPAAAASPA) has biased composition (low complexity). 2 positions are modified to phosphoserine: S210 and S259. K294 participates in a covalent cross-link: Glycyl lysine isopeptide (Lys-Gly) (interchain with G-Cter in SUMO); alternate. A Glycyl lysine isopeptide (Lys-Gly) (interchain with G-Cter in ubiquitin); alternate cross-link involves residue K294. A Glycyl lysine isopeptide (Lys-Gly) (interchain with G-Cter in SUMO) cross-link involves residue K385. NR C4-type zinc fingers lie at residues 421–441 (CLIC…CGSC) and 457–481 (CAGR…LRKC). Positions 421 to 486 (CLICGDEASG…RLRKCCQAGM (66 aa)) form a DNA-binding region, nuclear receptor. At S529 the chain carries Phosphoserine. The 235-residue stretch at 532 to 766 (QEIPFVPPMI…EFPEMMSEVI (235 aa)) folds into the NR LBD domain.

It belongs to the nuclear hormone receptor family. NR3 subfamily. Phosphorylation of Ser-529 is sharply increased upon progesterone treatment, whereas phosphorylation of Ser-210 and Ser-259 is modestly induced by progesterone. In terms of processing, ubiquitinated. Ubiquitination is increased by progesterone and represses sumoylation at the same site. Post-translationally, sumoylation is hormone-dependent and represses transcriptional activity. Sumoylation on all three sites is enhanced by PIAS3. Desumoylated by SENP1. Sumoylation on Lys-385, the main site of sumoylation, is repressed by ubiquitination on the same site. Oviduct and bursa of Fabricius.

The protein resides in the nucleus. The protein localises to the cytoplasm. Functionally, the steroid hormones and their receptors are involved in the regulation of eukaryotic gene expression and affect cellular proliferation and differentiation in target tissues. This chain is Progesterone receptor (PGR), found in Gallus gallus (Chicken).